A 259-amino-acid polypeptide reads, in one-letter code: Thiazole synthase (259 aa).

The Schiff-base intermediate with DXP role is filled by lysine 100. 1-deoxy-D-xylulose 5-phosphate-binding positions include glycine 161, 187–188 (AG), and 209–210 (NT).

It belongs to the ThiG family. As to quaternary structure, homotetramer. Forms heterodimers with either ThiH or ThiS.

Its subcellular location is the cytoplasm. It carries out the reaction [ThiS sulfur-carrier protein]-C-terminal-Gly-aminoethanethioate + 2-iminoacetate + 1-deoxy-D-xylulose 5-phosphate = [ThiS sulfur-carrier protein]-C-terminal Gly-Gly + 2-[(2R,5Z)-2-carboxy-4-methylthiazol-5(2H)-ylidene]ethyl phosphate + 2 H2O + H(+). Its pathway is cofactor biosynthesis; thiamine diphosphate biosynthesis. Catalyzes the rearrangement of 1-deoxy-D-xylulose 5-phosphate (DXP) to produce the thiazole phosphate moiety of thiamine. Sulfur is provided by the thiocarboxylate moiety of the carrier protein ThiS. In vitro, sulfur can be provided by H(2)S. This chain is Thiazole synthase, found in Halalkalibacterium halodurans (strain ATCC BAA-125 / DSM 18197 / FERM 7344 / JCM 9153 / C-125) (Bacillus halodurans).